We begin with the raw amino-acid sequence, 739 residues long: Vascular cell adhesion protein 1 (739 aa).

A signal peptide spans 1-24; sequence MPVKMVAIFGASTVLWILFAVSQA. 7 consecutive Ig-like C2-type domains span residues 25-111, 119-212, 223-309, 312-397, 408-506, 514-595, and 601-682; these read FKIE…IQVD, PEIQ…KERE, PKNT…LIVQ, PFTV…KTIQ, EIEI…QTLY, PTIW…VELI, and KDIQ…RSLT. The Extracellular segment spans residues 25-698; the sequence is FKIEISPEYK…ENNKDYFSPE (674 aa). 5 disulfide bridges follow: C47–C95, C52–C99, C137–C195, C246–C291, and C335–C383. N273 is a glycosylation site (N-linked (GlcNAc...) asparagine). Residues N424, N531, N561, and N650 are each glycosylated (N-linked (GlcNAc...) asparagine). C534 and C579 are disulfide-bonded. Residues 699–720 traverse the membrane as a helical segment; that stretch reads LLALYFASSLVIPAIGMIIYFA. Residues 721–739 lie on the Cytoplasmic side of the membrane; it reads RKANMKGSYSLVEAQKSKV.

As to quaternary structure, binds to ECMV-D capsid proteins and acts as a receptor for this virus. Post-translationally, cleaved by the metalloproteinase ADAM17 to generate the soluble form. Sialoglycoprotein. In terms of processing, ubiquitinated by TRIM65 via 'Lys-48'-linked ubiquitination; leading to proteasomal degradation. Expressed in aortic endothelial cells, with low expression in the descending thoracic aorta and the outer curvature of the aortic arch, where pulsatory shear stress exists, and high in the inner curvature of the aortic arch, where oscillatory shear stress prevails (at protein level). Expressed on inflamed vascular endothelium, as well as on macrophage-like and dendritic cell types in both normal and inflamed tissue.

The protein localises to the cell membrane. It is found in the secreted. In terms of biological role, cell adhesion glycoprotein predominantly expressed on the surface of endothelial cells that plays an important role in immune surveillance and inflammation. Acts as a major regulator of leukocyte adhesion to the endothelium through interaction with different types of integrins. During inflammatory responses, binds ligands on the surface of activated endothelial cells to initiate the activation of calcium channels and the plasma membrane-associated small GTPase RAC1 leading to leukocyte transendothelial migration. Also serves as a quality-control checkpoint for entry into bone marrow by providing a 'don't-eat-me' stamping in the context of major histocompatibility complex (MHC) class-I presentation. The polypeptide is Vascular cell adhesion protein 1 (Vcam1) (Rattus norvegicus (Rat)).